The primary structure comprises 100 residues: Urease subunit gamma (100 aa).

The protein belongs to the urease gamma subunit family. Heterotrimer of UreA (gamma), UreB (beta) and UreC (alpha) subunits. Three heterotrimers associate to form the active enzyme.

Its subcellular location is the cytoplasm. The catalysed reaction is urea + 2 H2O + H(+) = hydrogencarbonate + 2 NH4(+). Its pathway is nitrogen metabolism; urea degradation; CO(2) and NH(3) from urea (urease route): step 1/1. The chain is Urease subunit gamma from Jannaschia sp. (strain CCS1).